The chain runs to 186 residues: Elongation factor P (186 aa).

The protein belongs to the elongation factor P family.

The protein localises to the cytoplasm. Its pathway is protein biosynthesis; polypeptide chain elongation. In terms of biological role, involved in peptide bond synthesis. Stimulates efficient translation and peptide-bond synthesis on native or reconstituted 70S ribosomes in vitro. Probably functions indirectly by altering the affinity of the ribosome for aminoacyl-tRNA, thus increasing their reactivity as acceptors for peptidyl transferase. In Ruminiclostridium cellulolyticum (strain ATCC 35319 / DSM 5812 / JCM 6584 / H10) (Clostridium cellulolyticum), this protein is Elongation factor P.